The sequence spans 208 residues: CASP-like protein 2A1 (208 aa).

Residues 1-36 are Cytoplasmic-facing; that stretch reads MEERSGVLETSRSCKQLIGPEGSDKEFEGYIDSNLR. The chain crosses the membrane as a helical span at residues 37–57; that stretch reads VVETFLRLFPIGLCVTALVIM. The Extracellular portion of the chain corresponds to 58-79; the sequence is LKNSQENKYGSVSYTDLGAFRY. A helical membrane pass occupies residues 80–100; the sequence is LVHANGICAGYSLFSAIFVAL. Residues 101-107 lie on the Cytoplasmic side of the membrane; sequence PRLSSVH. The chain crosses the membrane as a helical span at residues 108 to 128; it reads IAWTFFVLDQVLTYIILSAGA. Over 129-159 the chain is Extracellular; sequence ASAEVLYLAEKGNMATAWSSACRSFGPFCHK. Residues 160-180 traverse the membrane as a helical segment; it reads VTASTTITFVVVVFYVLLSLI. Residues 181 to 208 lie on the Cytoplasmic side of the membrane; that stretch reads SSYKLFSKYDAPTVSNPSMGADIVAFHG.

This sequence belongs to the Casparian strip membrane proteins (CASP) family. In terms of assembly, homodimer and heterodimers.

It is found in the cell membrane. The protein is CASP-like protein 2A1 of Glycine max (Soybean).